The following is a 294-amino-acid chain: Protein RarD (294 aa).

Residues 1–11 (MDAKQTRQGVL) are Cytoplasmic-facing. A helical membrane pass occupies residues 12-34 (LALAAYFIWGIAPAYFKLIYYVP). The EamA domain maps to 18 to 145 (FIWGIAPAYF…AVCGVLVQLW (128 aa)). Over 35-37 (ADE) the chain is Periplasmic. A helical transmembrane segment spans residues 38 to 60 (ILTHRVIWSFFFMVALLSVSRQW). At 61 to 72 (RQVKRLLKTPKK) the chain is on the cytoplasmic side. The helical transmembrane segment at 73–95 (IFLLALSAVLVGGNWLLFIWAVN) threads the bilayer. Topologically, residues 96-99 (NHHM) are periplasmic. The chain crosses the membrane as a helical span at residues 100–122 (LEASLGYFINPLVNILLGMIFLG). The Cytoplasmic portion of the chain corresponds to 123 to 128 (ERFRRM). The chain crosses the membrane as a helical span at residues 129–146 (QWLAVILAVCGVLVQLWT). Over 147 to 149 (FGS) the chain is Periplasmic. The helical transmembrane segment at 150 to 167 (LPIIALGLAFSFAFYGLV) threads the bilayer. The Cytoplasmic portion of the chain corresponds to 168-179 (RKKIAVEAQTGM). A helical transmembrane segment spans residues 180-197 (LVETLWLLPVAAIYLFGI). The Periplasmic segment spans residues 198 to 211 (ADSPTSHMGQNALS). The helical transmembrane segment at 212-234 (LNLLLMAAGVVTTIPLLCFTGAA) threads the bilayer. Residues 235–238 (TRLR) are Cytoplasmic-facing. The chain crosses the membrane as a helical span at residues 239 to 261 (LSTLGFFQYIGPTLMFLLAVTFY). At 262 to 270 (GEVPGADKM) the chain is on the periplasmic side. The chain crosses the membrane as a helical span at residues 271-290 (VTFAFIWVALAIFVMDAIYT). Residues 291–294 (QRKK) are Cytoplasmic-facing.

Belongs to the EamA transporter family.

The protein resides in the cell inner membrane. In Salmonella typhimurium (strain LT2 / SGSC1412 / ATCC 700720), this protein is Protein RarD (rarD).